Consider the following 180-residue polypeptide: Cytochrome c oxidase assembly protein CtaG (180 aa).

Topologically, residues 1 to 8 (MSKKSNKS) are cytoplasmic. A helical; Signal-anchor for type II membrane protein transmembrane segment spans residues 9-29 (LAFSLLGLIVSMVLLSFAAVP). Topologically, residues 30 to 180 (LYNLFCKVTG…SFFKVRDVKK (151 aa)) are periplasmic.

This sequence belongs to the COX11/CtaG family.

It is found in the cell inner membrane. Its function is as follows. Exerts its effect at some terminal stage of cytochrome c oxidase synthesis, probably by being involved in the insertion of the copper B into subunit I. This is Cytochrome c oxidase assembly protein CtaG from Rickettsia bellii (strain RML369-C).